We begin with the raw amino-acid sequence, 879 residues long: mRNA-binding protein PUF3 (879 aa).

T83 bears the Phosphothreonine mark. A phosphoserine mark is found at S207 and S210. Disordered stretches follow at residues 222–256, 344–417, and 443–512; these read ESDKNFNKLNRNTTNSGSLYHSSSNSGSSASLESE, PANE…QQQQ, and KKRN…QQTY. A compositionally biased stretch (low complexity) spans 237–255; sequence SGSLYHSSSNSGSSASLES. Residues 370 to 395 are compositionally biased toward pro residues; sequence SSPPNNSPFPFAYPNPMMFMPPPPLS. Composition is skewed to low complexity over residues 398–417, 449–463, 472–491, and 501–512; these read QQQQQQQQQQQQEDQQQQQQ, NHPANNSNNANKQAN, TKNTSKKNASSKSNESTANN, and HSQSLQQQQQTY. Positions 513 to 871 constitute a PUM-HD domain; it reads HRSPLLEQLR…RHLASVEKLA (359 aa). 8 Pumilio repeats span residues 538-573, 574-609, 610-645, 646-681, 682-717, 718-759, 760-795, and 807-844; these read DIFGHSLEFCKDQHGSRFIQRELATSPASEKEVIFN, EIRDDAIELSNDVFGNYVIQKFFEFGSKIQKNTLVD, QFKGNMKQLSLQMYACRVIQKALEYIDSNQRIELVL, ELSDSVLQMIKDQNGNHVIQKAIETIPIEKLPFILS, SLTGHIYHLSTHSYGCRVIQRLLEFGSSEDQESILN, ELKD…EIIE, TVANNVVEYSKHKFASNVVEKSILYGSKNQKDLIIS, and NLEDDSPMILMIKDQFANYVIQKLVNVSEGEGKKLIVI.

Belongs to the PUF3 family.

It is found in the mitochondrion outer membrane. It localises to the cytoplasm. RNA-binding protein involved in post-transcriptional regulation. Negatively regulates expression of COX17 by binding to the 3'-UTR of COX17 mRNA. Promotes decay of COX17 mRNA by enhancing its rate of deadenylation and subsequent turnover. Predominantly binds to mRNAs encoding mitochondrial proteins and localizes them to the vicinity of mitochondria for translation. Regulates mitochondrial biogenesis, motility and morphology. This is mRNA-binding protein PUF3 (PUF3) from Saccharomyces cerevisiae (strain ATCC 204508 / S288c) (Baker's yeast).